A 343-amino-acid polypeptide reads, in one-letter code: Glycogen biosynthesis protein GlgD (343 aa).

Belongs to the bacterial/plant glucose-1-phosphate adenylyltransferase family.

In terms of biological role, required for the synthesis of glycogen. The sequence is that of Glycogen biosynthesis protein GlgD (glgD) from Geobacillus stearothermophilus (Bacillus stearothermophilus).